Consider the following 196-residue polypeptide: HTH-type transcriptional regulator BetI (196 aa).

The HTH tetR-type domain occupies 8–68 (EVRRAQLIDA…ATMRHILRDL (61 aa)). Positions 31 to 50 (TLASVAQRANISTGIVSHYF) form a DNA-binding region, H-T-H motif.

The protein operates within amine and polyamine biosynthesis; betaine biosynthesis via choline pathway [regulation]. Its function is as follows. Repressor involved in the biosynthesis of the osmoprotectant glycine betaine. It represses transcription of the choline transporter BetT and the genes of BetAB involved in the synthesis of glycine betaine. In Paraburkholderia phymatum (strain DSM 17167 / CIP 108236 / LMG 21445 / STM815) (Burkholderia phymatum), this protein is HTH-type transcriptional regulator BetI.